Here is a 361-residue protein sequence, read N- to C-terminus: NAD-dependent protein deacetylase hst2-1 (361 aa).

Positions 16-276 constitute a Deacetylase sirtuin-type domain; the sequence is SVLEARTVEA…RKLARALGWE (261 aa). NAD(+) is bound by residues 43–63 and 126–129; these read GAGI…TGIY and QNID. Catalysis depends on His146, which acts as the Proton acceptor. Residues Cys154, Cys157, Cys178, and Cys181 each contribute to the Zn(2+) site. NAD(+) is bound by residues 217–219, 242–244, and Cys262; these read GTS and NRE. The stretch at 294–328 forms a coiled coil; it reads EEELATPRTREERLENEISRLTAEIDKTLKISDAY. The segment at 335-361 is disordered; it reads RLEGEPLSSPESNGTGLAHVFPHLARR.

Belongs to the sirtuin family. Class I subfamily. It depends on Zn(2+) as a cofactor.

It localises to the cytoplasm. The protein localises to the nucleus. The catalysed reaction is N(6)-acetyl-L-lysyl-[protein] + NAD(+) + H2O = 2''-O-acetyl-ADP-D-ribose + nicotinamide + L-lysyl-[protein]. Its function is as follows. NAD-dependent histone deacetylase, which could function in telomeric silencing, cell cycle progression and chromosome stability. In Emericella nidulans (strain FGSC A4 / ATCC 38163 / CBS 112.46 / NRRL 194 / M139) (Aspergillus nidulans), this protein is NAD-dependent protein deacetylase hst2-1.